The chain runs to 395 residues: Phosphoglycerate kinase (395 aa).

Substrate is bound by residues 20–22 (DFN), Arg-36, 59–62 (HLGR), Arg-120, and Arg-157. ATP contacts are provided by residues Lys-208, Gly-296, Glu-327, and 353–356 (GGDT).

The protein belongs to the phosphoglycerate kinase family. Monomer.

It localises to the cytoplasm. The enzyme catalyses (2R)-3-phosphoglycerate + ATP = (2R)-3-phospho-glyceroyl phosphate + ADP. The protein operates within carbohydrate degradation; glycolysis; pyruvate from D-glyceraldehyde 3-phosphate: step 2/5. The polypeptide is Phosphoglycerate kinase (Tropheryma whipplei (strain Twist) (Whipple's bacillus)).